The chain runs to 261 residues: Pyrroline-5-carboxylate reductase (261 aa).

This sequence belongs to the pyrroline-5-carboxylate reductase family.

Its subcellular location is the cytoplasm. It carries out the reaction L-proline + NADP(+) = (S)-1-pyrroline-5-carboxylate + NADPH + 2 H(+). The enzyme catalyses L-proline + NAD(+) = (S)-1-pyrroline-5-carboxylate + NADH + 2 H(+). The protein operates within amino-acid biosynthesis; L-proline biosynthesis; L-proline from L-glutamate 5-semialdehyde: step 1/1. In terms of biological role, catalyzes the reduction of 1-pyrroline-5-carboxylate (PCA) to L-proline. This chain is Pyrroline-5-carboxylate reductase, found in Thermus thermophilus (strain ATCC BAA-163 / DSM 7039 / HB27).